The sequence spans 305 residues: MGTSGIEIFAALNDFTDAIVSVPESVCGKFTSLKEIDAQVRDIRQNVIQEIGVVLKNEKNDELSGEERCERLQKTLKEILPYSDSKICLATDAMNNIKSCIDRLDAGFEYVELEIPQQLRLGYPDDRALMNYHSTVTPQTSERRRETRRHQNNQHSQQYSSQERSSSYNNFEDASSPQSSYHTPTKRRKNAVPRKSSSPPLSSTKHAPQSTERRPVRRSESRLKQTNGEPLVKHDTLDSSDISREGEQLYCYCQQVSYGQMIGCDNENCKREWFHLPCVGLVEPPKGIWYCKECEELAKSSESRQ.

The segment at threonine 135 to serine 239 is disordered. The span at asparagine 153–serine 167 shows a compositional bias: low complexity. 2 stretches are compositionally biased toward polar residues: residues tyrosine 168–threonine 183 and lysine 195–serine 210. Tyrosine 181 bears the Phosphotyrosine mark. Phosphothreonine is present on threonine 183. Serine 197 and serine 198 each carry phosphoserine. Positions threonine 211–leucine 223 are enriched in basic and acidic residues. The segment at glutamine 248–leucine 297 adopts a PHD-type zinc-finger fold. Zn(2+)-binding residues include cysteine 251, cysteine 253, cysteine 264, cysteine 269, histidine 275, cysteine 278, cysteine 291, and cysteine 294.

The protein belongs to the ING family. Interacts with H3K4me3 and to a lesser extent with H3K4me2. Component of the clr6 histone deacetylase complex I'composed of at least clr6, png2, prw1, pst1 and sds3.

It localises to the cytoplasm. It is found in the nucleus. Its function is as follows. Component of the clr6 histone deacetylase complex I' responsible for the deacetylation of lysine residues on the N-terminal part of the core histones (H2A, H2B, H3 and H4). Histone deacetylation gives a tag for epigenetic repression and plays an important role in transcriptional regulation, cell cycle progression and developmental events. Has a role in silencing of mating type genes. The polypeptide is Chromatin modification-related protein png2 (png2) (Schizosaccharomyces pombe (strain 972 / ATCC 24843) (Fission yeast)).